The following is a 327-amino-acid chain: Biotin synthase (327 aa).

The region spanning 49–282 (FNKEKIDLCS…NKVIRLCGGR (234 aa)) is the Radical SAM core domain. Residues Cys-67, Cys-71, and Cys-74 each coordinate [4Fe-4S] cluster. Ser-110, Cys-142, Cys-201, and Arg-277 together coordinate [2Fe-2S] cluster.

Belongs to the radical SAM superfamily. Biotin synthase family. As to quaternary structure, homodimer. [4Fe-4S] cluster serves as cofactor. Requires [2Fe-2S] cluster as cofactor.

The enzyme catalyses (4R,5S)-dethiobiotin + (sulfur carrier)-SH + 2 reduced [2Fe-2S]-[ferredoxin] + 2 S-adenosyl-L-methionine = (sulfur carrier)-H + biotin + 2 5'-deoxyadenosine + 2 L-methionine + 2 oxidized [2Fe-2S]-[ferredoxin]. Its pathway is cofactor biosynthesis; biotin biosynthesis; biotin from 7,8-diaminononanoate: step 2/2. In terms of biological role, catalyzes the conversion of dethiobiotin (DTB) to biotin by the insertion of a sulfur atom into dethiobiotin via a radical-based mechanism. The protein is Biotin synthase of Methanococcus maripaludis (strain DSM 14266 / JCM 13030 / NBRC 101832 / S2 / LL).